The following is a 99-amino-acid chain: Integration host factor subunit alpha (99 aa).

The protein belongs to the bacterial histone-like protein family. Heterodimer of an alpha and a beta chain.

Functionally, this protein is one of the two subunits of integration host factor, a specific DNA-binding protein that functions in genetic recombination as well as in transcriptional and translational control. This chain is Integration host factor subunit alpha (ihfA), found in Xylella fastidiosa (strain 9a5c).